A 182-amino-acid polypeptide reads, in one-letter code: MKKHLLFLGPPGAGKGTQAAYLSEANSYLHLSTGELLRKEIDLDTYLGKQVKDIMNKGELVSDQLVLEIVNKNLSKDNKGWILDGYPRNLSQVNSLNEVLMNINQPLEIVFYLDVPDEVLIKRLLLRGRKDDNEETIKTRLKIYKETTEPLIEYYKNLSLLEYINADGDLKTISNDIKQKMA.

Gly12–Thr17 provides a ligand contact to ATP. The NMP stretch occupies residues Ser32–Val61. AMP contacts are provided by residues Thr33, Arg38, Glu59–Val61, Gly85–Arg88, and Gln92. Positions Leu126–Asp132 are LID. Arg127 contributes to the ATP binding site. Arg129 and Arg140 together coordinate AMP. Residue Gly168 coordinates ATP.

Belongs to the adenylate kinase family. In terms of assembly, monomer.

It is found in the cytoplasm. It carries out the reaction AMP + ATP = 2 ADP. The protein operates within purine metabolism; AMP biosynthesis via salvage pathway; AMP from ADP: step 1/1. Its function is as follows. Catalyzes the reversible transfer of the terminal phosphate group between ATP and AMP. Plays an important role in cellular energy homeostasis and in adenine nucleotide metabolism. This is Adenylate kinase from Prochlorococcus marinus (strain MIT 9515).